The chain runs to 864 residues: Leucine--tRNA ligase (864 aa).

The 'HIGH' region motif lies at Pro42 to His52. Positions Lys624–Ser628 match the 'KMSKS' region motif. Lys627 contributes to the ATP binding site.

It belongs to the class-I aminoacyl-tRNA synthetase family.

The protein localises to the cytoplasm. The enzyme catalyses tRNA(Leu) + L-leucine + ATP = L-leucyl-tRNA(Leu) + AMP + diphosphate. This is Leucine--tRNA ligase from Burkholderia vietnamiensis (strain G4 / LMG 22486) (Burkholderia cepacia (strain R1808)).